Here is a 407-residue protein sequence, read N- to C-terminus: Nicotinate phosphoribosyltransferase (407 aa).

His-224 is subject to Phosphohistidine; by autocatalysis.

Belongs to the NAPRTase family. Transiently phosphorylated on a His residue during the reaction cycle. Phosphorylation strongly increases the affinity for substrates and increases the rate of nicotinate D-ribonucleotide production. Dephosphorylation regenerates the low-affinity form of the enzyme, leading to product release.

The catalysed reaction is nicotinate + 5-phospho-alpha-D-ribose 1-diphosphate + ATP + H2O = nicotinate beta-D-ribonucleotide + ADP + phosphate + diphosphate. It participates in cofactor biosynthesis; NAD(+) biosynthesis; nicotinate D-ribonucleotide from nicotinate: step 1/1. In terms of biological role, catalyzes the synthesis of beta-nicotinate D-ribonucleotide from nicotinate and 5-phospho-D-ribose 1-phosphate at the expense of ATP. The protein is Nicotinate phosphoribosyltransferase of Pseudomonas savastanoi pv. phaseolicola (strain 1448A / Race 6) (Pseudomonas syringae pv. phaseolicola (strain 1448A / Race 6)).